A 351-amino-acid polypeptide reads, in one-letter code: MNSSLRDIANLVQGMVIGNDAITVSTLSPIDNILPGSLVFAEGEDNIKLAENSEAAAILIGQGTIDSPKPLIQVKNPFKAFIALLNHFYPPRRISPGVHPTAVIGAEVQLGDEVYVGPFVVIESGSIIGNHSVLKSHIHIGHNVVIGDHTTIHPQVTIYDNCRIGSNVTIHASTVIGSDGFGYTFVDGQHLKVPHSGYVVIENNVEIGANTAIDKATLGATVIGEGTKIDNLVQIAHSVKLGKHNIICAFTGIAGSTTTGNNVIFAANVGVSDHVHIEDEVILGARTGVPPHKHLKKGTVYLGNPAKPKDVAIKHELSVNRIPLIRKNIKSLTEQVAVINKKLDIKAKEVE.

H237 (proton acceptor) is an active-site residue.

It belongs to the transferase hexapeptide repeat family. LpxD subfamily. In terms of assembly, homotrimer.

It carries out the reaction a UDP-3-O-[(3R)-3-hydroxyacyl]-alpha-D-glucosamine + a (3R)-hydroxyacyl-[ACP] = a UDP-2-N,3-O-bis[(3R)-3-hydroxyacyl]-alpha-D-glucosamine + holo-[ACP] + H(+). Its pathway is bacterial outer membrane biogenesis; LPS lipid A biosynthesis. Catalyzes the N-acylation of UDP-3-O-acylglucosamine using 3-hydroxyacyl-ACP as the acyl donor. Is involved in the biosynthesis of lipid A, a phosphorylated glycolipid that anchors the lipopolysaccharide to the outer membrane of the cell. This is UDP-3-O-acylglucosamine N-acyltransferase 1 from Legionella pneumophila (strain Paris).